The primary structure comprises 251 residues: Putative F-box protein PP2-B12 (251 aa).

An F-box domain is found at 1-46 (MNFLDLPEECIATMISFTSPFDACRISAVSKLLRSAADSNTTWERF).

This Arabidopsis thaliana (Mouse-ear cress) protein is Putative F-box protein PP2-B12 (PP2B12).